A 184-amino-acid chain; its full sequence is dCTP deaminase (184 aa).

Position 107–112 (107–112 (KSTYAR)) interacts with dCTP. The Proton donor/acceptor role is filled by Glu-133. 3 residues coordinate dCTP: Gln-152, Tyr-166, and Gln-176.

Belongs to the dCTP deaminase family. Homotrimer.

It carries out the reaction dCTP + H2O + H(+) = dUTP + NH4(+). Its pathway is pyrimidine metabolism; dUMP biosynthesis; dUMP from dCTP (dUTP route): step 1/2. In terms of biological role, catalyzes the deamination of dCTP to dUTP. The sequence is that of dCTP deaminase from Herpetosiphon aurantiacus (strain ATCC 23779 / DSM 785 / 114-95).